The sequence spans 79 residues: Cytochrome b (79 aa).

The next 3 helical transmembrane spans lie at Thr1–Ala7, Trp31–Ile52, and Trp67–Ala79. 2 residues coordinate heme b: His37 and His51.

The protein belongs to the cytochrome b family. In terms of assembly, the cytochrome bc1 complex contains 11 subunits: 3 respiratory subunits (MT-CYB, CYC1 and UQCRFS1), 2 core proteins (UQCRC1 and UQCRC2) and 6 low-molecular weight proteins (UQCRH/QCR6, UQCRB/QCR7, UQCRQ/QCR8, UQCR10/QCR9, UQCR11/QCR10 and a cleavage product of UQCRFS1). This cytochrome bc1 complex then forms a dimer. Heme b serves as cofactor.

It is found in the mitochondrion inner membrane. In terms of biological role, component of the ubiquinol-cytochrome c reductase complex (complex III or cytochrome b-c1 complex) that is part of the mitochondrial respiratory chain. The b-c1 complex mediates electron transfer from ubiquinol to cytochrome c. Contributes to the generation of a proton gradient across the mitochondrial membrane that is then used for ATP synthesis. The polypeptide is Cytochrome b (MT-CYB) (Pomatostomus superciliosus (White-browed babbler)).